We begin with the raw amino-acid sequence, 742 residues long: Protein CdcH (742 aa).

Residues 230–237 and 503–510 each bind ATP; these read GPPGTGKT. The segment at 722 to 742 is disordered; the sequence is FKGSQGPNVNSRQGSEHIGFQ. The span at 723–734 shows a compositional bias: polar residues; sequence KGSQGPNVNSRQ.

Belongs to the AAA ATPase family. CDC48 subfamily.

Functionally, may be part of a transduction pathway connecting light to cell division. The sequence is that of Protein CdcH (cdcH) from Halobacterium salinarum (strain ATCC 700922 / JCM 11081 / NRC-1) (Halobacterium halobium).